A 159-amino-acid chain; its full sequence is Globin CTT-W (159 aa).

An N-terminal signal peptide occupies residues 1-16; it reads MKFLVILTLCIAGAIA. A Globin domain is found at 17-159; the sequence is HCDKAPFIKA…HHAIVYSILE (143 aa). Heme b contacts are provided by H73 and H108.

It belongs to the globin family.

The sequence is that of Globin CTT-W (CTT-W) from Chironomus thummi thummi (Midge).